The chain runs to 390 residues: LIM/homeobox protein Lhx4 (390 aa).

2 consecutive LIM zinc-binding domains span residues Pro28 to Thr87 and Lys88 to Asn150. The segment at residues Ala157–Lys216 is a DNA-binding region (homeobox). An interaction with DNA region spans residues Arg161–Lys181. The segment at Arg199–Lys211 is interaction with 5-mCpG DNA. 2 disordered regions span residues Val231–Asp253 and Met355–Phe390.

Transient expression in ventrolateral regions of the developing neural tube and hindbrain.

The protein resides in the nucleus. In terms of biological role, may play a critical role in the development of respiratory control mechanisms and in the normal growth and maturation of the lung. Binds preferentially to methylated DNA. In Mus musculus (Mouse), this protein is LIM/homeobox protein Lhx4 (Lhx4).